A 628-amino-acid polypeptide reads, in one-letter code: tRNA uridine 5-carboxymethylaminomethyl modification enzyme MnmG (628 aa).

14–19 (GAGHAG) is an FAD binding site. 273 to 287 (GPRYCPSIEDKVVRF) contacts NAD(+).

It belongs to the MnmG family. In terms of assembly, homodimer. Heterotetramer of two MnmE and two MnmG subunits. Requires FAD as cofactor.

The protein resides in the cytoplasm. Functionally, NAD-binding protein involved in the addition of a carboxymethylaminomethyl (cmnm) group at the wobble position (U34) of certain tRNAs, forming tRNA-cmnm(5)s(2)U34. The chain is tRNA uridine 5-carboxymethylaminomethyl modification enzyme MnmG from Bacillus velezensis (strain DSM 23117 / BGSC 10A6 / LMG 26770 / FZB42) (Bacillus amyloliquefaciens subsp. plantarum).